A 395-amino-acid chain; its full sequence is Acid ceramidase (395 aa).

An N-terminal signal peptide occupies residues 1 to 20; that stretch reads MLGWSRLTFILLSGIVTCLV. Cysteines 31 and 340 form a disulfide. The Nucleophile role is filled by C143. N-linked (GlcNAc...) asparagine glycans are attached at residues N195, N259, N286, and N342. An intrachain disulfide couples C388 to C392.

The protein belongs to the acid ceramidase family. Heterodimer; disulfide-linked. The heterodimer is composed of the disulfide-linked alpha and beta chains produced by autocatalytic cleavage of the precursor. Post-translationally, N-glycosylated. Proteolytically cleaved into two chains alpha and beta that remain associated via a disulfide bond. Cleavage gives rise to a conformation change that activates the enzyme. The same catalytic Cys residue mediates the autoproteolytic cleavage and subsequent hydrolysis of lipid substrates. The beta chain may undergo an additional C-terminal processing.

The protein resides in the lysosome. The protein localises to the secreted. It catalyses the reaction an N-acylsphing-4-enine + H2O = sphing-4-enine + a fatty acid. The catalysed reaction is N-dodecanoylsphing-4-enine + H2O = dodecanoate + sphing-4-enine. The enzyme catalyses N-tetradecanoylsphing-4-enine + H2O = tetradecanoate + sphing-4-enine. It carries out the reaction N-hexadecanoylsphing-4-enine + H2O = sphing-4-enine + hexadecanoate. It catalyses the reaction N-octadecanoylsphing-4-enine + H2O = sphing-4-enine + octadecanoate. The catalysed reaction is N-dodecanoyl-(4R)-hydroxysphinganine + H2O = (4R)-hydroxysphinganine + dodecanoate. The enzyme catalyses N-(dodecanoyl)-sphinganine + H2O = dodecanoate + sphinganine. It carries out the reaction N-(acetyl)-sphing-4-enine + H2O = sphing-4-enine + acetate. It catalyses the reaction N-(hexanoyl)sphing-4-enine + H2O = hexanoate + sphing-4-enine. The catalysed reaction is N-octanoylsphing-4-enine + H2O = octanoate + sphing-4-enine. The enzyme catalyses N-(9Z-octadecenoyl)-sphing-4-enine + H2O = sphing-4-enine + (9Z)-octadecenoate. It carries out the reaction N-dodecanoylethanolamine + H2O = dodecanoate + ethanolamine. It functions in the pathway lipid metabolism; sphingolipid metabolism. In terms of biological role, lysosomal ceramidase that hydrolyzes sphingolipid ceramides into sphingosine and free fatty acids at acidic pH. Ceramides, sphingosine, and its phosphorylated form sphingosine-1-phosphate are bioactive lipids that mediate cellular signaling pathways regulating several biological processes including cell proliferation, apoptosis and differentiation. Has a higher catalytic efficiency towards C12-ceramides versus other ceramides. Also catalyzes the reverse reaction allowing the synthesis of ceramides from fatty acids and sphingosine. For the reverse synthetic reaction, the natural sphingosine D-erythro isomer is more efficiently utilized as a substrate compared to D-erythro-dihydrosphingosine and D-erythro-phytosphingosine, while the fatty acids with chain lengths of 12 or 14 carbons are the most efficiently used. Also has an N-acylethanolamine hydrolase activity. By regulating the levels of ceramides, sphingosine and sphingosine-1-phosphate in the epidermis, mediates the calcium-induced differentiation of epidermal keratinocytes. Also indirectly regulates tumor necrosis factor/TNF-induced apoptosis. By regulating the intracellular balance between ceramides and sphingosine, in adrenocortical cells, probably also acts as a regulator of steroidogenesis. This chain is Acid ceramidase, found in Bos taurus (Bovine).